The chain runs to 309 residues: Sulfate adenylyltransferase subunit 2 (309 aa).

The protein belongs to the PAPS reductase family. CysD subfamily. As to quaternary structure, heterodimer composed of CysD, the smaller subunit, and CysN.

It carries out the reaction sulfate + ATP + H(+) = adenosine 5'-phosphosulfate + diphosphate. It functions in the pathway sulfur metabolism; hydrogen sulfide biosynthesis; sulfite from sulfate: step 1/3. Its function is as follows. With CysN forms the ATP sulfurylase (ATPS) that catalyzes the adenylation of sulfate producing adenosine 5'-phosphosulfate (APS) and diphosphate, the first enzymatic step in sulfur assimilation pathway. APS synthesis involves the formation of a high-energy phosphoric-sulfuric acid anhydride bond driven by GTP hydrolysis by CysN coupled to ATP hydrolysis by CysD. The protein is Sulfate adenylyltransferase subunit 2 of Mycolicibacterium gilvum (strain PYR-GCK) (Mycobacterium gilvum (strain PYR-GCK)).